The primary structure comprises 494 residues: MFS-type transporter lnaF (494 aa).

The segment at 1-51 is disordered; it reads MTYDPENAMGEARADAPVEAEKEHEATQTTVKESTLGYDNSSDPSRRDSYR. Residues 12 to 26 are compositionally biased toward basic and acidic residues; sequence ARADAPVEAEKEHEA. N-linked (GlcNAc...) asparagine glycans are attached at residues Asn-40, Asn-58, and Asn-68. The next 10 helical transmembrane spans lie at 105-125, 128-148, 156-176, 203-223, 228-248, 290-310, 323-343, 354-374, 383-403, and 446-466; these read SLLI…DMFS, AGLL…TLAL, MLWY…GEYP, TLMA…CLIA, LPVT…IIMV, LAFF…STII, AIWQ…GAWL, ILGF…FPHL, VLYG…IGLI, and STFY…WFLP.

This sequence belongs to the major facilitator superfamily. Sugar transporter (TC 2.A.1.1) family.

It localises to the cell membrane. In terms of biological role, MFS-type transporter; part of the lna gene cluster that mediates the biosynthesis of diastereomeric piperazines. Lna and lnb clusters encode sets of enzymes that produce overlapping sets of previously undescribed metabolites such as piperazinomycin-like metabolites or morpholine. The lna and lnb biosynthetic pathways appear to be part of a signaling network that controls the formation of sclerotia, a resilient overwintering structure. May be involved in the secretion of the metabolites produced by the lna and lnb clusters. This is MFS-type transporter lnaF from Aspergillus flavus (strain ATCC 200026 / FGSC A1120 / IAM 13836 / NRRL 3357 / JCM 12722 / SRRC 167).